The primary structure comprises 279 residues: Movement protein (279 aa).

The protein belongs to the cucumovirus movement protein family.

Its subcellular location is the host cell junction. The protein resides in the host plasmodesma. In terms of biological role, transports viral genome to neighboring plant cells directly through plasmosdesmata, without any budding. The movement protein allows efficient cell to cell propagation, by bypassing the host cell wall barrier. Acts by forming a tubular structure at the host plasmodesmata, enlarging it enough to allow free passage of virion capsids. The sequence is that of Movement protein from Cucumber mosaic virus (strain Kin) (CMV).